Here is a 329-residue protein sequence, read N- to C-terminus: MTDVRFRIIGTGAYVPERIVSNDEVGAPAGVDDDWITRKTGIRQRRWAADDQATSDLATAAGRAALKAAGITPEQLTVIAVATSTPDRPQPPTAAYVQHHLGATGTAAFDVNAVCSGTVFALSSVAGTLVYRGGYALVIGADLYSRILNPADRKTVVLFGDGAGAMVLGPTSTGTGPIVRRVALHTFGGLTDLIRVPAGGSRQPLDTDGLDAGLQYFAMDGREVRRFVTEHLPQLIKGFLHEAGVDAADISHFVPHQANGVMLDEVFGELHLPRATMHRTVETYGNTGAASIPITMDAAVRAGSFRPGELVLLAGFGGGMAASFALIEW.

Active-site residues include Cys115, His256, and Asn286.

This sequence belongs to the thiolase-like superfamily. FabH family. Homodimer.

The protein localises to the cytoplasm. It carries out the reaction malonyl-CoA + acetyl-CoA + H(+) = acetoacetyl-CoA + CO2 + CoA. It participates in metabolic intermediate biosynthesis; (R)-mevalonate biosynthesis. In terms of biological role, catalyzes the condensation of acetyl-CoA and malonyl-CoA to form acetoacetyl-CoA and CoA. Does not accept malonyl-[acyl-carrier-protein] as a substrate. Can also convert malonyl-CoA into acetyl-CoA via decarboxylation of malonyl-CoA. The polypeptide is Acetoacetyl CoA synthase NphT7 (nphT7) (Streptomyces sp. (strain CL190)).